Consider the following 97-residue polypeptide: uncharacterized protein (97 aa).

Residues Thr-72–Lys-97 form a disordered region. The span at Val-73–Pro-88 shows a compositional bias: basic and acidic residues.

This sequence belongs to the chlamydial CPn_0121/CT_031/TC_0300 family.

This is an uncharacterized protein from Chlamydia pneumoniae (Chlamydophila pneumoniae).